Consider the following 261-residue polypeptide: Hydroxyethylthiazole kinase (261 aa).

Met-40 contacts substrate. Lys-116 and Thr-162 together coordinate ATP. Gly-189 lines the substrate pocket.

Belongs to the Thz kinase family. Requires Mg(2+) as cofactor.

It carries out the reaction 5-(2-hydroxyethyl)-4-methylthiazole + ATP = 4-methyl-5-(2-phosphooxyethyl)-thiazole + ADP + H(+). It participates in cofactor biosynthesis; thiamine diphosphate biosynthesis; 4-methyl-5-(2-phosphoethyl)-thiazole from 5-(2-hydroxyethyl)-4-methylthiazole: step 1/1. Functionally, catalyzes the phosphorylation of the hydroxyl group of 4-methyl-5-beta-hydroxyethylthiazole (THZ). This chain is Hydroxyethylthiazole kinase, found in Methanosarcina acetivorans (strain ATCC 35395 / DSM 2834 / JCM 12185 / C2A).